Consider the following 679-residue polypeptide: Kelch-like protein diablo (679 aa).

The span at 1-48 (MGDLPGGGGGAAGGAGAAGGGGGGGNGAAGSSSSGGGASGSGGGGPGS) shows a compositional bias: gly residues. A disordered region spans residues 1-84 (MGDLPGGGGG…RLSHTSEKHP (84 aa)). The region spanning 101 to 168 (CDVVLNVGGR…CYTAHIIVEE (68 aa)) is the BTB domain. The BACK domain occupies 203-305 (CLGIRAFADT…SPKFLVGTVG (103 aa)). Kelch repeat units lie at residues 352–398 (VLFA…VLND), 400–446 (LYAV…VLDG), 447–493 (FLYA…VLGG), 495–540 (LYAI…VFNN), 542–587 (IYAV…VVNG), and 588–634 (QLYA…VMRA). Residues 643 to 679 (CDNNSSNNNNNNYNLKHQQQQPQQQQQQQQQQTQQQL) are disordered. A compositionally biased stretch (low complexity) spans 645–679 (NNSSNNNNNNYNLKHQQQQPQQQQQQQQQQTQQQL).

It participates in protein modification; protein ubiquitination. In terms of biological role, probable substrate-specific adapter of an E3 ubiquitin-protein ligase complex which mediates the ubiquitination and subsequent proteasomal degradation of target proteins. May have a role in synapse differentiation and growth. This chain is Kelch-like protein diablo, found in Drosophila willistoni (Fruit fly).